A 55-amino-acid chain; its full sequence is Large ribosomal subunit protein bL33 (55 aa).

It belongs to the bacterial ribosomal protein bL33 family.

The sequence is that of Large ribosomal subunit protein bL33 from Cereibacter sphaeroides (strain ATCC 17029 / ATH 2.4.9) (Rhodobacter sphaeroides).